We begin with the raw amino-acid sequence, 292 residues long: Pyridoxal 5'-phosphate synthase subunit PdxS (292 aa).

Position 22 (Asp-22) interacts with D-ribose 5-phosphate. Lys-79 acts as the Schiff-base intermediate with D-ribose 5-phosphate in catalysis. Residue Gly-151 coordinates D-ribose 5-phosphate. Arg-163 lines the D-glyceraldehyde 3-phosphate pocket. D-ribose 5-phosphate contacts are provided by residues Gly-212 and 233 to 234 (GS).

The protein belongs to the PdxS/SNZ family. In terms of assembly, in the presence of PdxT, forms a dodecamer of heterodimers.

The catalysed reaction is aldehydo-D-ribose 5-phosphate + D-glyceraldehyde 3-phosphate + L-glutamine = pyridoxal 5'-phosphate + L-glutamate + phosphate + 3 H2O + H(+). The protein operates within cofactor biosynthesis; pyridoxal 5'-phosphate biosynthesis. In terms of biological role, catalyzes the formation of pyridoxal 5'-phosphate from ribose 5-phosphate (RBP), glyceraldehyde 3-phosphate (G3P) and ammonia. The ammonia is provided by the PdxT subunit. Can also use ribulose 5-phosphate and dihydroxyacetone phosphate as substrates, resulting from enzyme-catalyzed isomerization of RBP and G3P, respectively. This Ruminiclostridium cellulolyticum (strain ATCC 35319 / DSM 5812 / JCM 6584 / H10) (Clostridium cellulolyticum) protein is Pyridoxal 5'-phosphate synthase subunit PdxS.